Reading from the N-terminus, the 787-residue chain is Dolichyl-diphosphooligosaccharide--protein glycosyltransferase subunit STT3A (787 aa).

The Cytoplasmic portion of the chain corresponds to 1 to 18; sequence MAEPESSTAAAGGSRLRN. Residues 19-39 traverse the membrane as a helical segment; that stretch reads ACGGVLCAFTLLLIGVLAFSI. Topologically, residues 40–125 are lumenal; it reads RLFSVIKYES…LSVETVCVFT (86 aa). Positions 53–55 match the DXD motif 1 motif; that stretch reads EFD. Asp55 provides a ligand contact to Mn(2+). Residues 126–144 traverse the membrane as a helical segment; the sequence is APIFSANASWATYLLTKEA. The Cytoplasmic portion of the chain corresponds to 145–146; that stretch reads KG. The chain crosses the membrane as a helical span at residues 147–164; it reads TGAGLMAAAILAMVPSYI. At 165 to 175 the chain is on the lumenal side; that stretch reads SRSVAGSYDNE. 2 residues coordinate Mn(2+): Asp173 and Glu175. The short motif at 173–175 is the DXD motif 2 element; that stretch reads DNE. A helical transmembrane segment spans residues 176–195; sequence AVAIFALIFTFYLYVKTLNT. The Cytoplasmic portion of the chain corresponds to 196–197; that stretch reads GS. Residues 198–212 form a helical membrane-spanning segment; sequence LFYATLNALSYFYMV. The Lumenal segment spans residues 213–217; that stretch reads CSWGG. Residues 218 to 234 traverse the membrane as a helical segment; sequence YTFIINLIPIHVLLCIV. At 235–239 the chain is on the cytoplasmic side; the sequence is TGRYS. Residues 240–265 traverse the membrane as a helical segment; that stretch reads SRLYIAYAPLVILGTLLAALVPVVGF. Residues 266-273 lie on the Lumenal side of the membrane; it reads NAVMTSEH. The chain crosses the membrane as a helical span at residues 274–293; it reads FASFLVFIILHVVALVYYIK. Residues 294–306 are Cytoplasmic-facing; that stretch reads GLLTPRLFKVAMT. A helical membrane pass occupies residues 307–327; sequence LVITVGLAVCFAVIAILIALV. Over 328–365 the chain is Lumenal; it reads ASSPTKGWSGRSLSLLDPTYASKYIPIIASVSEHQPPT. The short motif at 357 to 360 is the SVSE motif element; it reads SVSE. The chain crosses the membrane as a helical span at residues 366 to 388; it reads WPSYFMDINVLAFLIPAGIISCF. The Cytoplasmic segment spans residues 389-394; sequence LPLSDA. Residues 395 to 411 form a helical membrane-spanning segment; sequence SSFVVLYLVTAVYFSGV. At 412-415 the chain is on the lumenal side; the sequence is MVRL. Arg414 contributes to the dolichyl diphosphooligosaccharide binding site. A helical transmembrane segment spans residues 416-437; the sequence is MLVLAPAACILSGIALSEAFDV. The Cytoplasmic segment spans residues 438–525; the sequence is LTRSVKYQLS…KLLVLPMEAS (88 aa). Over residues 453 to 475 the composition is skewed to low complexity; it reads SPAASGDSSAESSSASTVSTNSA. A disordered region spans residues 453–507; it reads SPAASGDSSAESSSASTVSTNSAKNETRPEKTETAPKEKPSKKNRKKEKEVAESV. Residues 477–504 show a composition bias toward basic and acidic residues; that stretch reads NETRPEKTETAPKEKPSKKNRKKEKEVA. The chain crosses the membrane as a helical span at residues 526 to 546; the sequence is VLGILLLIVLGGFYVVHCVWA. Residues 547 to 787 lie on the Lumenal side of the membrane; it reads AAEAYSAPSI…AAGRKKNPWQ (241 aa). Residues 592-594 are interacts with target acceptor peptide in protein substrate; it reads WWD. A WWDYG motif motif is present at residues 592 to 596; the sequence is WWDYG. Dolichyl diphosphooligosaccharide is bound at residue Tyr597. 2 N-linked (GlcNAc...) asparagine glycosylation sites follow: Asn604 and Asn611. Asn615 carries N-linked (GlcNAc...) (high mannose) asparagine glycosylation. Residues 659–666 carry the DK motif motif; sequence DINKFLWM. Positions 759 to 769 are enriched in basic residues; it reads RVRGKLKKLKS. The interval 759 to 787 is disordered; the sequence is RVRGKLKKLKSGSKASSTNAAGRKKNPWQ.

The protein belongs to the STT3 family. As to quaternary structure, component of the oligosaccharyltransferase (OST) complex. Mg(2+) serves as cofactor. It depends on Mn(2+) as a cofactor.

The protein resides in the endoplasmic reticulum membrane. The enzyme catalyses a di-trans,poly-cis-dolichyl diphosphooligosaccharide + L-asparaginyl-[protein] = N(4)-(oligosaccharide-(1-&gt;4)-N-acetyl-beta-D-glucosaminyl-(1-&gt;4)-N-acetyl-beta-D-glucosaminyl)-L-asparaginyl-[protein] + a di-trans,poly-cis-dolichyl diphosphate + H(+). Its pathway is protein modification; protein glycosylation. Functionally, catalytic subunit of the oligosaccharyl transferase (OST) complex that catalyzes the initial transfer of a defined glycan (Glc(3)Man(9)GlcNAc(2) in eukaryotes) from the lipid carrier dolichol-pyrophosphate to an asparagine residue within an Asn-X-Ser/Thr consensus motif in nascent polypeptide chains, the first step in protein N-glycosylation. N-glycosylation occurs cotranslationally and the complex associates with the Sec61 complex at the channel-forming translocon complex that mediates protein translocation across the endoplasmic reticulum (ER). All subunits are required for a maximal enzyme activity. This subunit contains the active site and the acceptor peptide and donor lipid-linked oligosaccharide (LLO) binding pockets. This chain is Dolichyl-diphosphooligosaccharide--protein glycosyltransferase subunit STT3A (STT3A), found in Oryza sativa subsp. japonica (Rice).